Consider the following 230-residue polypeptide: Urease accessory protein UreF (230 aa).

It belongs to the UreF family. As to quaternary structure, ureD, UreF and UreG form a complex that acts as a GTP-hydrolysis-dependent molecular chaperone, activating the urease apoprotein by helping to assemble the nickel containing metallocenter of UreC. The UreE protein probably delivers the nickel.

It localises to the cytoplasm. Required for maturation of urease via the functional incorporation of the urease nickel metallocenter. The protein is Urease accessory protein UreF of Cupriavidus necator (strain ATCC 17699 / DSM 428 / KCTC 22496 / NCIMB 10442 / H16 / Stanier 337) (Ralstonia eutropha).